The primary structure comprises 911 residues: Androgen receptor (911 aa).

Positions 1-549 (MEVQLGLGRV…PIDYYFPPQK (549 aa)) are modulating. An interaction with ZNF318 region spans residues 1-578 (MEVQLGLGRV…GSCKVFFKRA (578 aa)). 2 disordered regions span residues 35–164 (QNPG…LSLL) and 192–225 (QQQQQEAVSEGSSSGRAREASGAPTSSKDNYLGG). Low complexity predominate over residues 44–88 (AASAAPPGASLLLQQQQQQQQQQQQQQQQQQQQQQETSPRQQQQQ). S81 carries the phosphoserine; by CDK9 modification. Phosphoserine is present on S93. Residues 192–214 (QQQQQEAVSEGSSSGRAREASGA) are compositionally biased toward low complexity. The segment covering 215-225 (PTSSKDNYLGG) has biased composition (polar residues). Residue Y222 is modified to Phosphotyrosine; by CSK. A Phosphoserine modification is found at S255. The residue at position 266 (Y266) is a Phosphotyrosine; by CSK and TNK2. Phosphotyrosine; by CSK is present on residues Y306, Y345, Y356, and Y361. A Phosphotyrosine; by CSK and TNK2 modification is found at Y362. K385 is covalently cross-linked (Glycyl lysine isopeptide (Lys-Gly) (interchain with G-Cter in SUMO)). The residue at position 392 (Y392) is a Phosphotyrosine; by CSK. A Glycyl lysine isopeptide (Lys-Gly) (interchain with G-Cter in SUMO) cross-link involves residue K512. Phosphotyrosine; by CSK occurs at positions 526 and 543. Residues 543 to 910 (YYFPPQKTCL…GKVKPIYFHT (368 aa)) form an interaction with LPXN region. 2 NR C4-type zinc fingers span residues 551-571 (CLICGDEASGCHYGALTCGSC) and 587-611 (CASRNDCTIDKFRRKNCPSCRLRKC). The segment at residues 551–623 (CLICGDEASG…AGMTLGARKL (73 aa)) is a DNA-binding region (nuclear receptor). The interaction with HIPK3 stretch occupies residues 563–653 (YGALTCGSCK…TEETTQKLTV (91 aa)). An interaction with CCAR1 region spans residues 583–910 (QKYLCASRND…GKVKPIYFHT (328 aa)). Positions 616-910 (MTLGARKLKK…GKVKPIYFHT (295 aa)) are interaction with KAT7. S642 carries the phosphoserine; by STK4/MST1 modification. One can recognise an NR LBD domain in the interval 660–891 (ECQPIFLNVL…DFPEMMAEII (232 aa)). 17beta-hydroxy-5alpha-androstan-3-one contacts are provided by N697 and R744. Glycyl lysine isopeptide (Lys-Gly) (interchain with G-Cter in ubiquitin) cross-links involve residues K837 and K839. T869 contacts 17beta-hydroxy-5alpha-androstan-3-one. Y907 carries the phosphotyrosine; by CSK modification.

This sequence belongs to the nuclear hormone receptor family. NR3 subfamily. Binds DNA as a homodimer. Part of a ternary complex containing AR, EFCAB6/DJBP and PARK7. Interacts with HIPK3 and NR0B2 in the presence of androgen. The ligand binding domain interacts with KAT7/HBO1 in the presence of dihydrotestosterone. Interacts with EFCAB6/DJBP, PQBP1, RANBP9, RBAK, SPDEF, SRA1, TGFB1I1 and RREB1. Interacts with ZMIZ1/ZIMP10 and ZMIZ2/ZMIP7 which both enhance its transactivation activity. Interacts with SLC30A9 and RAD54L2/ARIP4. Interacts with MACROD1 (via macro domain). Interacts via the ligand-binding domain with LXXLL and FXXLF motifs from NCOA1, NCOA2, NCOA3 and MAGEA11. Interacts (via nuclear receptor DNA binding domain and nuclear receptor ligand binding domain) with NCOA4. The AR N-terminal poly-Gln region binds Ran resulting in enhancement of AR-mediated transactivation. Ran-binding decreases as the poly-Gln length increases. Interacts with HIP1 (via coiled coil domain). Interacts (via ligand-binding domain) with TRIM68. Interacts with TNK2. Interacts with USP26. Interacts with RNF6. Interacts (regulated by RNF6 probably through polyubiquitination) with RNF14; regulates AR transcriptional activity. Interacts with PRMT2 and TRIM24. Interacts with RACK1. Interacts with RANBP10; this interaction enhances dihydrotestosterone-induced AR transcriptional activity. Interacts with PRPF6 in a hormone-independent way; this interaction enhances dihydrotestosterone-induced AR transcriptional activity. Interacts with STK4/MST1. Interacts with ZIPK/DAPK3. Interacts with LPXN. Interacts with MAK. Part of a complex containing AR, MAK and NCOA3. Interacts with CRY1. Interacts with CCAR1 and GATA2. Interacts with ZNF318. Interacts with BUD31. Interacts with ARID4A. Interacts with ARID4B. Interacts (via NR LBD domain) with ZBTB7A; the interaction is direct and androgen-dependent. Interacts with NCOR1. Interacts with NCOR2. Interacts with CRY2 in a ligand-dependent manner. Phosphorylated in prostate cancer cells in response to several growth factors including EGF. Phosphorylation is induced by c-Src kinase (CSK). Tyr-526 is one of the major phosphorylation sites and an increase in phosphorylation and Src kinase activity is associated with prostate cancer progression. Phosphorylation by TNK2 enhances the DNA-binding and transcriptional activity. Phosphorylation at Ser-81 by CDK9 regulates AR promoter selectivity and cell growth. Post-translationally, sumoylated on Lys-385 (major) and Lys-512. Ubiquitinated. Deubiquitinated by USP26. 'Lys-6' and 'Lys-27'-linked polyubiquitination by RNF6 modulates AR transcriptional activity and specificity. In terms of processing, palmitoylated by ZDHHC7 and ZDHHC21. Palmitoylation is required for plasma membrane targeting and for rapid intracellular signaling via ERK and AKT kinases and cAMP generation.

It localises to the nucleus. Its subcellular location is the cytoplasm. In terms of biological role, steroid hormone receptors are ligand-activated transcription factors that regulate eukaryotic gene expression and affect cellular proliferation and differentiation in target tissues. Transcription factor activity is modulated by bound coactivator and corepressor proteins like ZBTB7A that recruits NCOR1 and NCOR2 to the androgen response elements/ARE on target genes, negatively regulating androgen receptor signaling and androgen-induced cell proliferation. Transcription activation is also down-regulated by NR0B2. Activated, but not phosphorylated, by HIPK3 and ZIPK/DAPK3. This is Androgen receptor (AR) from Pan troglodytes (Chimpanzee).